Here is a 218-residue protein sequence, read N- to C-terminus: 3-dehydroquinate dehydratase (218 aa).

3-dehydroquinate is bound by residues glutamate 29 to arginine 31 and arginine 56. The active-site Proton donor/acceptor is the histidine 116. Catalysis depends on lysine 142, which acts as the Schiff-base intermediate with substrate. Residues arginine 180, serine 200, and glutamine 204 each contribute to the 3-dehydroquinate site.

This sequence belongs to the type-I 3-dehydroquinase family. Homodimer.

The catalysed reaction is 3-dehydroquinate = 3-dehydroshikimate + H2O. It participates in metabolic intermediate biosynthesis; chorismate biosynthesis; chorismate from D-erythrose 4-phosphate and phosphoenolpyruvate: step 3/7. Its function is as follows. Involved in the third step of the chorismate pathway, which leads to the biosynthesis of aromatic amino acids. Catalyzes the cis-dehydration of 3-dehydroquinate (DHQ) and introduces the first double bond of the aromatic ring to yield 3-dehydroshikimate. The polypeptide is 3-dehydroquinate dehydratase (Methanococcus maripaludis (strain DSM 14266 / JCM 13030 / NBRC 101832 / S2 / LL)).